Consider the following 299-residue polypeptide: MNLNMRTDVEPRTEIPPVVITGLSGAGLSSAARVLEDMGWYVTQNIPSQFVVQLVELCADPHSPVDKIAIVSDVRSKEFSGSLEEVISELSGLGLKPLVVFMDARNDVLIKRFDNLRRTHPLQGSGTLLVGIEREREIMNQIKESADVVIDTSDLSIHDLRRSIELNFNGIANKLQHVTVQSFGFKHGSPRDTDLLIDVRFLPNPFWVPELRPFRGTDKPVSDYVLADEGAQKFLDNFTRMLRDMRPGFKHEGKNFITVSVGCTGGHHRSVAIAEELARRLREVPDLDVSVNHRDIARN.

ATP is bound at residue 22-29 (GLSGAGLS). 73 to 76 (DVRS) is a binding site for GTP.

Belongs to the RapZ-like family.

Its function is as follows. Displays ATPase and GTPase activities. The chain is Nucleotide-binding protein DIP1313 from Corynebacterium diphtheriae (strain ATCC 700971 / NCTC 13129 / Biotype gravis).